Reading from the N-terminus, the 444-residue chain is Pre-mRNA-splicing factor cwc25 (444 aa).

3 disordered regions span residues 1–27 (MGSG…QKAE), 168–385 (LASM…TDLD), and 397–425 (EAER…GFMS). A coiled-coil region spans residues 19-65 (NVAATQKAEAEAIAERKKLQQRLQEIEEERRKEEIQKALEAAGGKRK). A compositionally biased stretch (basic residues) spans 186–199 (QRRHKHRSHHHRSD). 2 stretches are compositionally biased toward basic and acidic residues: residues 200 to 220 (RHRD…DRDR) and 228 to 281 (DSRD…DDRS). Positions 282-293 (RRHRFPQGRSRS) are enriched in basic residues. 3 stretches are compositionally biased toward basic and acidic residues: residues 305–344 (RREY…EQPK), 360–372 (DGDH…ERAK), and 397–410 (EAER…EKAR). The stretch at 364 to 417 (KNAEEERAKKLAAMQAAATDLDKAREERLKALAEAERAEREADEKARQQNKKFR) forms a coiled coil.

Belongs to the CWC25 family. As to quaternary structure, associated with the spliceosome.

The protein localises to the nucleus. Involved in pre-mRNA splicing. This is Pre-mRNA-splicing factor cwc25 (msp-6) from Neurospora crassa (strain ATCC 24698 / 74-OR23-1A / CBS 708.71 / DSM 1257 / FGSC 987).